A 387-amino-acid chain; its full sequence is 3-ketoacyl-CoA thiolase (387 aa).

Cys91 serves as the catalytic Acyl-thioester intermediate. Catalysis depends on proton acceptor residues His343 and Cys373.

Belongs to the thiolase-like superfamily. Thiolase family. Heterotetramer of two alpha chains (FadB) and two beta chains (FadA).

It is found in the cytoplasm. It carries out the reaction an acyl-CoA + acetyl-CoA = a 3-oxoacyl-CoA + CoA. Its pathway is lipid metabolism; fatty acid beta-oxidation. Catalyzes the final step of fatty acid oxidation in which acetyl-CoA is released and the CoA ester of a fatty acid two carbons shorter is formed. The protein is 3-ketoacyl-CoA thiolase of Pectobacterium carotovorum subsp. carotovorum (strain PC1).